The chain runs to 444 residues: ATPase PAAT (444 aa).

4 positions are modified to phosphoserine: Ser-177, Ser-182, Ser-254, and Ser-302. The disordered stretch occupies residues 424 to 444 (PSPGMPLRHYDSRERLSNGER). Residues 431–444 (RHYDSRERLSNGER) are compositionally biased toward basic and acidic residues.

In terms of assembly, homodimer. Interacts with ABCB7, ABCB8/MITOSUR and ABCB10.

The protein resides in the cytoplasm. It is found in the mitochondrion. The enzyme catalyses ATP + H2O = ADP + phosphate + H(+). Functionally, ATPase that regulates mitochondrial ABC transporters ABCB7, ABCB8/MITOSUR and ABCB10. Regulates mitochondrial ferric concentration and heme biosynthesis and plays a role in the maintenance of mitochondrial homeostasis and cell survival. This is ATPase PAAT from Rattus norvegicus (Rat).